Consider the following 638-residue polypeptide: 1-deoxy-D-xylulose-5-phosphate synthase (638 aa).

Residues H76 and 117–119 (AHS) contribute to the thiamine diphosphate site. Position 148 (D148) interacts with Mg(2+). Thiamine diphosphate contacts are provided by residues 149-150 (GS), N177, Y287, and E369. N177 serves as a coordination point for Mg(2+).

The protein belongs to the transketolase family. DXPS subfamily. In terms of assembly, homodimer. Requires Mg(2+) as cofactor. Thiamine diphosphate is required as a cofactor.

The enzyme catalyses D-glyceraldehyde 3-phosphate + pyruvate + H(+) = 1-deoxy-D-xylulose 5-phosphate + CO2. It functions in the pathway metabolic intermediate biosynthesis; 1-deoxy-D-xylulose 5-phosphate biosynthesis; 1-deoxy-D-xylulose 5-phosphate from D-glyceraldehyde 3-phosphate and pyruvate: step 1/1. Functionally, catalyzes the acyloin condensation reaction between C atoms 2 and 3 of pyruvate and glyceraldehyde 3-phosphate to yield 1-deoxy-D-xylulose-5-phosphate (DXP). In Rhodopseudomonas palustris (strain HaA2), this protein is 1-deoxy-D-xylulose-5-phosphate synthase.